We begin with the raw amino-acid sequence, 77 residues long: Translation initiation factor IF-1, chloroplastic (77 aa).

The S1-like domain maps to 1-71 (MKEQKLIHEG…TRGRIIYRLR (71 aa)).

It belongs to the IF-1 family. In terms of assembly, component of the 30S ribosomal translation pre-initiation complex which assembles on the 30S ribosome in the order IF-2 and IF-3, IF-1 and N-formylmethionyl-tRNA(fMet); mRNA recruitment can occur at any time during PIC assembly.

The protein localises to the plastid. Its subcellular location is the chloroplast. Functionally, one of the essential components for the initiation of protein synthesis. Stabilizes the binding of IF-2 and IF-3 on the 30S subunit to which N-formylmethionyl-tRNA(fMet) subsequently binds. Helps modulate mRNA selection, yielding the 30S pre-initiation complex (PIC). Upon addition of the 50S ribosomal subunit IF-1, IF-2 and IF-3 are released leaving the mature 70S translation initiation complex. This chain is Translation initiation factor IF-1, chloroplastic, found in Ceratophyllum demersum (Rigid hornwort).